The chain runs to 204 residues: Large ribosomal subunit protein uL4 (204 aa).

The segment at 49 to 74 (AKKRGEVSGGGKKPWSQKGGGRARAG) is disordered. Residues 55-71 (VSGGGKKPWSQKGGGRA) are compositionally biased toward gly residues.

The protein belongs to the universal ribosomal protein uL4 family. As to quaternary structure, part of the 50S ribosomal subunit.

Functionally, one of the primary rRNA binding proteins, this protein initially binds near the 5'-end of the 23S rRNA. It is important during the early stages of 50S assembly. It makes multiple contacts with different domains of the 23S rRNA in the assembled 50S subunit and ribosome. Forms part of the polypeptide exit tunnel. In Wolinella succinogenes (strain ATCC 29543 / DSM 1740 / CCUG 13145 / JCM 31913 / LMG 7466 / NCTC 11488 / FDC 602W) (Vibrio succinogenes), this protein is Large ribosomal subunit protein uL4.